The primary structure comprises 272 residues: Aquaporin-1 (272 aa).

At 1-11 (MASEFKKKLFW) the chain is on the cytoplasmic side. The helical transmembrane segment at 12-29 (RAVVAEFLAMILFIFISI) threads the bilayer. The Extracellular segment spans residues 30–48 (GSALGFHYPIKSNQTTGAV). An N-linked (GlcNAc...) asparagine glycan is attached at Asn42. A helical membrane pass occupies residues 49–67 (QDNVKVSLAFGLSIATLAQ). Topologically, residues 68-70 (SVG) are cytoplasmic. The stretch at 71–84 (HISGAHLNPAVTLG) is an intramembrane region. The NPA 1 signature appears at 78 to 80 (NPA). The Cytoplasmic portion of the chain corresponds to 85–92 (LLLSCQIS). A helical transmembrane segment spans residues 93–111 (ILRAIMYIIAQCVGAIVAT). The Extracellular segment spans residues 112–135 (VILSGITSSLPDNSLGLNALAPGV). Residues 136-155 (NSGQGLGIEIIGTLQLVLCV) form a helical membrane-spanning segment. At 156-166 (LATTDRRRRRD) the chain is on the cytoplasmic side. Residues 167–184 (LGDSGPLAIGFSVALGHL) traverse the membrane as a helical segment. Residues 185–189 (LAIDY) are Extracellular-facing. An intramembrane segment occupies 190 to 202 (TGCGINPARSFGS). The NPA 2 motif lies at 195–197 (NPA). The Extracellular segment spans residues 203 to 209 (SVITHNF). The helical transmembrane segment at 210 to 227 (QDHWIFWVGPFIGAALAV) threads the bilayer. The Cytoplasmic portion of the chain corresponds to 228 to 272 (LIYDFILAPRSSDLTDRVKVWTSGQVEEYDLDADDINSRVEMKPK). Ser250 carries the post-translational modification Phosphoserine. Tyr256 bears the Phosphotyrosine mark. Ser265 is subject to Phosphoserine.

This sequence belongs to the MIP/aquaporin (TC 1.A.8) family. As to quaternary structure, homotetramer; each monomer provides an independent water pore. Component of the ankyrin-1 complex in the erythrocyte, composed of ANK1, RHCE, RHAG, SLC4A1, EPB42, GYPA, GYPB and AQP1. Interacts with EPHB2; involved in endolymph production in the inner ear. Identified in a complex with STOM. Interacts (via the N-terminal) with ANK1 (via ANK 1-5 repeats). Interacts (via the C-terminal) with EPB42. In terms of tissue distribution, detected in fetal kidney (at protein level). Detected in fetal kidney.

It is found in the cell membrane. The enzyme catalyses H2O(in) = H2O(out). The catalysed reaction is nitric oxide(out) = nitric oxide(in). It carries out the reaction CO2(out) = CO2(in). It catalyses the reaction glycerol(in) = glycerol(out). The enzyme catalyses H2O2(out) = H2O2(in). The catalysed reaction is K(+)(in) = K(+)(out). It carries out the reaction Na(+)(in) = Na(+)(out). In terms of biological role, forms a water channel that facilitates the transport of water across cell membranes, playing a crucial role in water homeostasis in various tissues. Could also be permeable to small solutes including hydrogen peroxide, glycerol and gases such as amonnia (NH3), nitric oxide (NO) and carbon dioxide (CO2). Recruited to the ankyrin-1 complex, a multiprotein complex of the erythrocyte membrane, it could be part of a CO2 metabolon, linking facilitated diffusion of CO2 across the membrane, anion exchange of Cl(-)/HCO3(-) and interconversion of dissolved CO2 and carbonic acid in the cytosol. In vitro, it shows non-selective gated cation channel activity and may be permeable to cations like K(+) and Na(+) in vivo. The chain is Aquaporin-1 from Ovis aries (Sheep).